The primary structure comprises 303 residues: Methyltransferase ktnA (303 aa).

This sequence belongs to the class I-like SAM-binding methyltransferase superfamily. S-adenosyl-L-methionine is required as a cofactor.

Functionally, non-reducing polyketide synthase; part of the gene cluster that mediates the biosynthesis of the bicoumarin kotanin. The non-reducing polyketide synthase ktnS first catalyzes the formation of the pentaketidic 4,7-dihydroxy-5-methylcoumarin from acetyl coenzyme A and 4 malonyl coenzyme A molecules. Further O-methylation by ktnB leads to the formation of 7-demethylsiderin. Then, an oxidative phenol coupling catalyzed by the cytochrome P450 monooxygenase ktnC forms the 8,8'-dimer P-orlandin via dimerization the monomeric precursor, 7-demethylsiderin. P-orlandin is subsequently O-methylated in a stepwise fashion to demethylkotanin and kotanin. The function of ktnA within the pathway has not been determined yet. The chain is Methyltransferase ktnA from Aspergillus niger (strain ATCC MYA-4892 / CBS 513.88 / FGSC A1513).